The sequence spans 195 residues: ATP-dependent Clp protease proteolytic subunit (195 aa).

The active-site Nucleophile is serine 99. The active site involves histidine 124.

It belongs to the peptidase S14 family. In terms of assembly, fourteen ClpP subunits assemble into 2 heptameric rings which stack back to back to give a disk-like structure with a central cavity, resembling the structure of eukaryotic proteasomes.

The protein resides in the cytoplasm. It catalyses the reaction Hydrolysis of proteins to small peptides in the presence of ATP and magnesium. alpha-casein is the usual test substrate. In the absence of ATP, only oligopeptides shorter than five residues are hydrolyzed (such as succinyl-Leu-Tyr-|-NHMec, and Leu-Tyr-Leu-|-Tyr-Trp, in which cleavage of the -Tyr-|-Leu- and -Tyr-|-Trp bonds also occurs).. Its function is as follows. Cleaves peptides in various proteins in a process that requires ATP hydrolysis. Has a chymotrypsin-like activity. Plays a major role in the degradation of misfolded proteins. This Coxiella burnetii (strain RSA 331 / Henzerling II) protein is ATP-dependent Clp protease proteolytic subunit.